The primary structure comprises 405 residues: Bestrophin homolog 14 (405 aa).

A run of 4 helical transmembrane segments spans residues 28–48, 63–83, 223–243, and 256–276; these read LIGF…LLDE, IGAQ…LIVA, LVYT…CLIG, and EITI…LGWL.

Belongs to the anion channel-forming bestrophin (TC 1.A.46) family. Calcium-sensitive chloride channel subfamily.

The protein localises to the membrane. The sequence is that of Bestrophin homolog 14 (best-14) from Caenorhabditis elegans.